The chain runs to 198 residues: Patulin synthesis protein F (198 aa).

The N-terminal stretch at 1 to 18 (MRLSTVLLGSLLGALTQA) is a signal peptide. Asparagine 128 and asparagine 184 each carry an N-linked (GlcNAc...) asparagine glycan.

It belongs to the patF family.

It is found in the cytoplasm. The protein resides in the cytosol. It catalyses the reaction phyllostine = neopatulin. The protein operates within mycotoxin biosynthesis; patulin biosynthesis. Part of the gene cluster that mediates the biosynthesis of patulin, an acetate-derived tetraketide mycotoxin produced by several fungal species that shows antimicrobial properties against several bacteria. PatF catalyzes the conversion of phyllostine into neopatulin. The pathway begins with the synthesis of 6-methylsalicylic acid by the polyketide synthase (PKS) patK via condensation of acetate and malonate units. The 6-methylsalicylic acid decarboxylase patG then catalyzes the decarboxylation of 6-methylsalicylic acid to yield m-cresol (also known as 3-methylphenol). These first reactions occur in the cytosol. The intermediate m-cresol is then transported into the endoplasmic reticulum where the cytochrome P450 monooxygenase patH converts it to m-hydroxybenzyl alcohol, which is further converted to gentisyl alcohol by the cytochrome P450 monooxygenase patI. The oxidoreductases patJ and patO further convert gentisyl alcohol to isoepoxydon in the vacuole. PatN catalyzes then the transformation of isoepoxydon into phyllostine. The cluster protein patF is responsible for the conversion from phyllostine to neopatulin whereas the alcohol dehydrogenase patD converts neopatulin to E-ascladiol. The steps between isoepoxydon and E-ascladiol occur in the cytosol, and E-ascladiol is probably secreted to the extracellular space by one of the cluster-specific transporters patC or patM. Finally, the secreted patulin synthase patE catalyzes the conversion of E-ascladiol to patulin. The chain is Patulin synthesis protein F from Aspergillus clavatus (strain ATCC 1007 / CBS 513.65 / DSM 816 / NCTC 3887 / NRRL 1 / QM 1276 / 107).